We begin with the raw amino-acid sequence, 1054 residues long: Probable sucrose-phosphate synthase 1 (1054 aa).

A compositionally biased stretch (basic and acidic residues) spans 104–115 (RLERERGRREAV). Disordered stretches follow at residues 104–125 (RLER…LSEG), 674–693 (LRNE…SDSL), and 708–727 (DGDK…DDRA).

Belongs to the glycosyltransferase 1 family. As to quaternary structure, homodimer or homotetramer.

The enzyme catalyses beta-D-fructose 6-phosphate + UDP-alpha-D-glucose = sucrose 6(F)-phosphate + UDP + H(+). Its pathway is glycan biosynthesis; sucrose biosynthesis; sucrose from D-fructose 6-phosphate and UDP-alpha-D-glucose: step 1/2. Its activity is regulated as follows. Activity is regulated by phosphorylation and moderated by concentration of metabolites and light. Plays a role in photosynthetic sucrose synthesis by catalyzing the rate-limiting step of sucrose biosynthesis from UDP-glucose and fructose- 6-phosphate. Involved in the regulation of carbon partitioning in the leaves of plants. May regulate the synthesis of sucrose and therefore play a major role as a limiting factor in the export of photoassimilates out of the leaf. Plays a role for sucrose availability that is essential for plant growth and fiber elongation. In Craterostigma plantagineum (Blue gem), this protein is Probable sucrose-phosphate synthase 1 (SPS1).